Consider the following 381-residue polypeptide: Queuine tRNA-ribosyltransferase (381 aa).

Residue Asp103 is the Proton acceptor of the active site. Residues 103 to 107 (DSGGF), Asp157, Gln200, and Gly227 each bind substrate. The segment at 258-264 (GVGTYRE) is RNA binding. Asp277 acts as the Nucleophile in catalysis. The tract at residues 282 to 286 (TRLAR) is RNA binding; important for wobble base 34 recognition. Zn(2+) is bound by residues Cys315, Cys317, Cys320, and His346.

It belongs to the queuine tRNA-ribosyltransferase family. Homodimer. Within each dimer, one monomer is responsible for RNA recognition and catalysis, while the other monomer binds to the replacement base PreQ1. Zn(2+) is required as a cofactor.

The catalysed reaction is 7-aminomethyl-7-carbaguanine + guanosine(34) in tRNA = 7-aminomethyl-7-carbaguanosine(34) in tRNA + guanine. It participates in tRNA modification; tRNA-queuosine biosynthesis. Functionally, catalyzes the base-exchange of a guanine (G) residue with the queuine precursor 7-aminomethyl-7-deazaguanine (PreQ1) at position 34 (anticodon wobble position) in tRNAs with GU(N) anticodons (tRNA-Asp, -Asn, -His and -Tyr). Catalysis occurs through a double-displacement mechanism. The nucleophile active site attacks the C1' of nucleotide 34 to detach the guanine base from the RNA, forming a covalent enzyme-RNA intermediate. The proton acceptor active site deprotonates the incoming PreQ1, allowing a nucleophilic attack on the C1' of the ribose to form the product. After dissociation, two additional enzymatic reactions on the tRNA convert PreQ1 to queuine (Q), resulting in the hypermodified nucleoside queuosine (7-(((4,5-cis-dihydroxy-2-cyclopenten-1-yl)amino)methyl)-7-deazaguanosine). The chain is Queuine tRNA-ribosyltransferase from Cyanothece sp. (strain PCC 7425 / ATCC 29141).